Reading from the N-terminus, the 318-residue chain is Transaldolase (318 aa).

The active-site Schiff-base intermediate with substrate is Lys-132.

The protein belongs to the transaldolase family. Type 1 subfamily. As to quaternary structure, homodimer.

The protein resides in the cytoplasm. It carries out the reaction D-sedoheptulose 7-phosphate + D-glyceraldehyde 3-phosphate = D-erythrose 4-phosphate + beta-D-fructose 6-phosphate. The protein operates within carbohydrate degradation; pentose phosphate pathway; D-glyceraldehyde 3-phosphate and beta-D-fructose 6-phosphate from D-ribose 5-phosphate and D-xylulose 5-phosphate (non-oxidative stage): step 2/3. Transaldolase is important for the balance of metabolites in the pentose-phosphate pathway. The sequence is that of Transaldolase from Shewanella baltica (strain OS223).